A 246-amino-acid polypeptide reads, in one-letter code: Eukaryotic translation initiation factor 6 (246 aa).

2 positions are modified to phosphoserine; by CK1: Ser-174 and Ser-175.

Belongs to the eIF-6 family. Monomer. Associates with the 60S ribosomal subunit. Phosphorylation at Ser-174 and Ser-175 promotes nuclear export.

It localises to the cytoplasm. The protein resides in the nucleus. The protein localises to the nucleolus. Binds to the 60S ribosomal subunit and prevents its association with the 40S ribosomal subunit to form the 80S initiation complex in the cytoplasm. Is also involved in ribosome biogenesis. Associates with pre-60S subunits in the nucleus and is involved in its nuclear export. The polypeptide is Eukaryotic translation initiation factor 6 (Sordaria macrospora (strain ATCC MYA-333 / DSM 997 / K(L3346) / K-hell)).